A 380-amino-acid chain; its full sequence is High affinity transport system protein p37 (380 aa).

An N-terminal signal peptide occupies residues 1–26; the sequence is MLKRKKLLQGFLKFLPLIIPATIFVS. A lipid anchor (N-palmitoyl cysteine) is attached at Cys-27. The S-diacylglycerol cysteine moiety is linked to residue Cys-27. A disordered region spans residues 285–304; it reads NHFYTPTENNGKGDSEKSNN.

The protein resides in the cell membrane. In terms of biological role, P37 is part of a high-affinity transport system. This Mycoplasma pneumoniae (strain ATCC 29342 / M129 / Subtype 1) (Mycoplasmoides pneumoniae) protein is High affinity transport system protein p37 (p37).